Reading from the N-terminus, the 153-residue chain is Large ribosomal subunit protein bL9 (153 aa).

Belongs to the bacterial ribosomal protein bL9 family.

In terms of biological role, binds to the 23S rRNA. The protein is Large ribosomal subunit protein bL9 of Tropheryma whipplei (strain Twist) (Whipple's bacillus).